We begin with the raw amino-acid sequence, 218 residues long: Large ribosomal subunit protein bL25 (218 aa).

The segment at 197 to 218 (PAEESGEKPVAHIEEKESTEKE) is disordered. Residues 201 to 218 (SGEKPVAHIEEKESTEKE) are compositionally biased toward basic and acidic residues.

This sequence belongs to the bacterial ribosomal protein bL25 family. CTC subfamily. Part of the 50S ribosomal subunit; part of the 5S rRNA/L5/L18/L25 subcomplex. Contacts the 5S rRNA. Binds to the 5S rRNA independently of L5 and L18.

In terms of biological role, this is one of the proteins that binds to the 5S RNA in the ribosome where it forms part of the central protuberance. This Dehalococcoides mccartyi (strain ATCC BAA-2100 / JCM 16839 / KCTC 5957 / BAV1) protein is Large ribosomal subunit protein bL25.